The primary structure comprises 467 residues: Dihydrolipoyl dehydrogenase (467 aa).

FAD-binding positions include 33–41 (EPKYWGGIC), K50, and G113. Residues C41 and C46 are joined by a disulfide bond. NAD(+) is bound by residues 181–185 (GAGAI), E204, and 269–272 (AIGF). D312 and A320 together coordinate FAD. Residue H446 is the Proton acceptor of the active site.

This sequence belongs to the class-I pyridine nucleotide-disulfide oxidoreductase family. In terms of assembly, homodimer. Part of the PDH complex, consisting of multiple copies of AceE (E1), DlaT (E2) and Lpd (E3), and of the BCKADH complex, consisting of multiple copies of BkdA/BkdB (E1), BkdC (E2) and Lpd (E3). The cofactor is FAD.

The protein resides in the cytoplasm. The catalysed reaction is N(6)-[(R)-dihydrolipoyl]-L-lysyl-[protein] + NAD(+) = N(6)-[(R)-lipoyl]-L-lysyl-[protein] + NADH + H(+). In terms of biological role, lipoamide dehydrogenase is a component of the alpha-ketoacid dehydrogenase complexes. Catalyzes the reoxidation of dihydrolipoyl groups which are covalently attached to the lipoate acyltransferase components (E2) of the complexes. This Mycobacterium leprae (strain TN) protein is Dihydrolipoyl dehydrogenase (lpd).